A 366-amino-acid polypeptide reads, in one-letter code: Ferrochelatase (366 aa).

Fe cation contacts are provided by histidine 210 and glutamate 293.

It belongs to the ferrochelatase family.

Its subcellular location is the cytoplasm. The enzyme catalyses heme b + 2 H(+) = protoporphyrin IX + Fe(2+). The protein operates within porphyrin-containing compound metabolism; protoheme biosynthesis; protoheme from protoporphyrin-IX: step 1/1. In terms of biological role, catalyzes the ferrous insertion into protoporphyrin IX. This Leptospira borgpetersenii serovar Hardjo-bovis (strain L550) protein is Ferrochelatase.